A 237-amino-acid chain; its full sequence is Trypsin-1 (237 aa).

The Peptidase S1 domain maps to 1–237; sequence IVGGTDAVLG…HVDWIKANAV (237 aa). Cys30 and Cys46 form a disulfide bridge. Catalysis depends on His45, which acts as the Charge relay system. Residues Glu64, Val69, and Glu74 each contribute to the Ca(2+) site. Catalysis depends on Asp96, which acts as the Charge relay system. 2 disulfide bridges follow: Cys159–Cys174 and Cys185–Cys213. Residue Ser189 is the Charge relay system of the active site.

Belongs to the peptidase S1 family. Ca(2+) serves as cofactor.

Its subcellular location is the secreted. It localises to the extracellular space. It carries out the reaction Preferential cleavage: Arg-|-Xaa, Lys-|-Xaa.. In Astacus astacus (Noble crayfish), this protein is Trypsin-1.